A 610-amino-acid polypeptide reads, in one-letter code: ABC transporter ATP-binding protein/permease wht-3 (610 aa).

In terms of domain architecture, ABC transporter spans 42–277; the sequence is VKTRKKLFSK…FADCGHPIPK (236 aa). 74–81 contacts ATP; it reads GASGAGKT. 5 helical membrane-spanning segments follow: residues 396 to 416, 446 to 466, 477 to 497, 503 to 523, and 584 to 604; these read ALYFLIAELTFSTMFGIMTFM, LPLFTIDGALMIVISYWMIGL, ILISVLVEQSATSCGLFLACL, LAIAFAVPASGLFALLSGLYG, and VIGLCSIVIFFYLAGYIALFI.

It belongs to the ABC transporter superfamily. ABCG family. Eye pigment precursor importer (TC 3.A.1.204) subfamily.

The protein resides in the membrane. Required for efficient RNA interference (RNAi) of pop-1 indicating a role in the germline development. The chain is ABC transporter ATP-binding protein/permease wht-3 (wht-3) from Caenorhabditis elegans.